The chain runs to 336 residues: Serpentine receptor class beta-15 (336 aa).

Transmembrane regions (helical) follow at residues L24–F44, F57–S77, I109–M129, L142–Y162, F186–L206, V237–L257, and G276–L296.

It belongs to the nematode receptor-like protein srb family.

It localises to the membrane. The chain is Serpentine receptor class beta-15 (srb-15) from Caenorhabditis elegans.